A 273-amino-acid polypeptide reads, in one-letter code: DNA repair protein RecO (273 aa).

This sequence belongs to the RecO family.

Functionally, involved in DNA repair and RecF pathway recombination. The chain is DNA repair protein RecO from Mycolicibacterium gilvum (strain PYR-GCK) (Mycobacterium gilvum (strain PYR-GCK)).